A 150-amino-acid chain; its full sequence is D-aminoacyl-tRNA deacylase (150 aa).

The short motif at 138-139 (GP) is the Gly-cisPro motif, important for rejection of L-amino acids element.

This sequence belongs to the DTD family. Homodimer.

It is found in the cytoplasm. It carries out the reaction glycyl-tRNA(Ala) + H2O = tRNA(Ala) + glycine + H(+). It catalyses the reaction a D-aminoacyl-tRNA + H2O = a tRNA + a D-alpha-amino acid + H(+). Functionally, an aminoacyl-tRNA editing enzyme that deacylates mischarged D-aminoacyl-tRNAs. Also deacylates mischarged glycyl-tRNA(Ala), protecting cells against glycine mischarging by AlaRS. Acts via tRNA-based rather than protein-based catalysis; rejects L-amino acids rather than detecting D-amino acids in the active site. By recycling D-aminoacyl-tRNA to D-amino acids and free tRNA molecules, this enzyme counteracts the toxicity associated with the formation of D-aminoacyl-tRNA entities in vivo and helps enforce protein L-homochirality. This chain is D-aminoacyl-tRNA deacylase, found in Akkermansia muciniphila (strain ATCC BAA-835 / DSM 22959 / JCM 33894 / BCRC 81048 / CCUG 64013 / CIP 107961 / Muc).